Here is a 239-residue protein sequence, read N- to C-terminus: Small ribosomal subunit protein uS3c (239 aa).

In terms of domain architecture, KH type-2 spans I43–K139. The disordered stretch occupies residues N50–M74.

The protein belongs to the universal ribosomal protein uS3 family. Part of the 30S ribosomal subunit.

Its subcellular location is the plastid. It localises to the chloroplast. This Triticum aestivum (Wheat) protein is Small ribosomal subunit protein uS3c (rps3).